The primary structure comprises 512 residues: MEELQEYFKKDRSPQQHFLYPLLLQEYIYTLAHDDSLNGSIFYEPIEFIGYDNKFSLVLVKRLIIRMYQQNFLIYLVNDSNQNRFGGHSNYFYSHFFYSQMVSKGFSVIVEIPFSLRLVSSSEEKEIPKSQNLGSIHSIFPFLEDKLSHLNNVSDILIPHPIHFEILVQILQCWIQDVPSLHLLRFFLHKYQNLNKTIQSNKTIYVFSKENKRLFWFLHNSYVSECEFLLVFFHKQSCYLRSTSSGAFLERSHFYGKMEHIIIVCCNNFQKTLWPVKDPLIHYVRYQGKAILASRGTHLLMKKWRYYFVNFWQYYFHFWSQPYRMHINSLLNYSFYFMGYLLGVLINPYAVKNQMLENSFLIDTVINKFDTIIPIIPLIGSLSKAKFCTFSGHPISKPIWADLLDFDIIDRFGRICRNLSHYHSGSSKKQSLYRIKYILRLSCARTLARKHKSTVRALLQRLGSGLLEEFFTEEEQVLSFFFPKTTLFTLHGSHRERIWSLDIIRINDLVNN.

This sequence belongs to the intron maturase 2 family. MatK subfamily.

It localises to the plastid. The protein resides in the chloroplast. Its function is as follows. Usually encoded in the trnK tRNA gene intron. Probably assists in splicing its own and other chloroplast group II introns. In Lilium henryi (Henry's lily), this protein is Maturase K.